The sequence spans 517 residues: Cell division cycle protein 73 (517 aa).

The segment covering 124 to 135 (SEPEAKKPRLDG) has biased composition (basic and acidic residues). 2 disordered regions span residues 124–159 (SEPEAKKPRLDGEAAGEPMDTSTSDEPQESAVSAAK) and 306–326 (GHHAVQKAPDAPPGRPPLAKP). The segment covering 315–324 (DAPPGRPPLA) has biased composition (pro residues).

It belongs to the CDC73 family. In terms of assembly, component of the PAF1 complex which consists of at least cdc-73, ctr-9, leo-1, pafo-1 and rtfo-1.

The protein resides in the nucleus. Functionally, component of the PAF1 complex which is a multifunctional complex involved in transcription initiation via genetic interactions with TATA-binding proteins, elongation and transcription-coupled histone modification. The chain is Cell division cycle protein 73 from Caenorhabditis elegans.